A 310-amino-acid polypeptide reads, in one-letter code: Probable mitochondrial import receptor subunit TOM40-2 (310 aa).

M1 bears the N-acetylmethionine mark.

The protein belongs to the Tom40 family. In terms of assembly, forms part of the preprotein translocase complex of the outer mitochondrial membrane (TOM complex) which consists of at least 6 different proteins (TOM5, TOM6, TOM7, TOM20, TOM22/TOM9 and TOM40). Present in a large lipid-enriched complex called mitochondrial transmembrane lipoprotein (MTL) complex made of proteins located in the two mitochondrial membranes, including the TOM complex and the core components of the MICOS complex and containing at least digalactosyldiacylglycerol (DGDG). Binds to MIC60. Component of a mitochondrial large protein complex that contains, at least, MIC60, DGS1, TOM40, TOM20 proteins, and petC/RISP. Expressed in roots, flowers, young cotyledons and leaves.

The protein localises to the mitochondrion outer membrane. Central component of the receptor complex responsible for the recognition and translocation of cytosolically synthesized mitochondrial preproteins. Together with TOM22 functions as the transit peptide receptor at the surface of the mitochondrion outer membrane and facilitates the movement of preproteins into the translocation pore. Directly involved in the pore formation. The sequence is that of Probable mitochondrial import receptor subunit TOM40-2 from Arabidopsis thaliana (Mouse-ear cress).